The chain runs to 629 residues: Probable alpha-L-arabinofuranosidase A (629 aa).

The signal sequence occupies residues M1–G25. N-linked (GlcNAc...) asparagine glycans are attached at residues N36, N51, N140, N152, N168, N171, N260, N494, and N534.

The protein belongs to the glycosyl hydrolase 51 family.

It is found in the secreted. The enzyme catalyses Hydrolysis of terminal non-reducing alpha-L-arabinofuranoside residues in alpha-L-arabinosides.. It participates in glycan metabolism; L-arabinan degradation. In terms of biological role, alpha-L-arabinofuranosidase involved in the degradation of arabinoxylan, a major component of plant hemicellulose. Acts only on small linear 1,5-alpha-linked L-arabinofuranosyl oligosaccharides. In Aspergillus oryzae (strain ATCC 42149 / RIB 40) (Yellow koji mold), this protein is Probable alpha-L-arabinofuranosidase A (abfA).